Here is a 271-residue protein sequence, read N- to C-terminus: 5-amino-6-(5-phospho-D-ribitylamino)uracil phosphatase YbjI (271 aa).

D9 functions as the Nucleophile in the catalytic mechanism. D9 is a Mg(2+) binding site. Residue M10 participates in phosphate binding. A Mg(2+)-binding site is contributed by D11. Phosphate contacts are provided by residues 44-45 (SG) and K192. D215 contacts Mg(2+). Residue N218 coordinates phosphate.

This sequence belongs to the HAD-like hydrolase superfamily. Cof family. Mg(2+) is required as a cofactor. It depends on Mn(2+) as a cofactor. Requires Co(2+) as cofactor. The cofactor is Zn(2+).

The enzyme catalyses 5-amino-6-(5-phospho-D-ribitylamino)uracil + H2O = 5-amino-6-(D-ribitylamino)uracil + phosphate. It functions in the pathway cofactor biosynthesis; riboflavin biosynthesis; 5-amino-6-(D-ribitylamino)uracil from GTP: step 4/4. In terms of biological role, catalyzes the dephosphorylation of 5-amino-6-(5-phospho-D-ribitylamino)uracil, and thus could be involved in the riboflavin biosynthesis pathway. Is also able to dephosphorylate flavin mononucleotide (FMN), erythrose 4-phosphate and other phosphoric acid esters. This chain is 5-amino-6-(5-phospho-D-ribitylamino)uracil phosphatase YbjI (ybjI), found in Escherichia coli (strain K12).